A 28-amino-acid polypeptide reads, in one-letter code: Cytochrome c oxidase subunit 5B, mitochondrial (28 aa).

It belongs to the cytochrome c oxidase subunit 5B family. In terms of assembly, component of the cytochrome c oxidase (complex IV, CIV), a multisubunit enzyme composed of a catalytic core of 3 subunits and several supernumerary subunits. The complex exists as a monomer or a dimer and forms supercomplexes (SCs) in the inner mitochondrial membrane with ubiquinol-cytochrome c oxidoreductase (cytochrome b-c1 complex, complex III, CIII).

The protein resides in the mitochondrion inner membrane. The protein operates within energy metabolism; oxidative phosphorylation. In terms of biological role, component of the cytochrome c oxidase, the last enzyme in the mitochondrial electron transport chain which drives oxidative phosphorylation. The respiratory chain contains 3 multisubunit complexes succinate dehydrogenase (complex II, CII), ubiquinol-cytochrome c oxidoreductase (cytochrome b-c1 complex, complex III, CIII) and cytochrome c oxidase (complex IV, CIV), that cooperate to transfer electrons derived from NADH and succinate to molecular oxygen, creating an electrochemical gradient over the inner membrane that drives transmembrane transport and the ATP synthase. Cytochrome c oxidase is the component of the respiratory chain that catalyzes the reduction of oxygen to water. Electrons originating from reduced cytochrome c in the intermembrane space (IMS) are transferred via the dinuclear copper A center (CU(A)) of subunit 2 and heme A of subunit 1 to the active site in subunit 1, a binuclear center (BNC) formed by heme A3 and copper B (CU(B)). The BNC reduces molecular oxygen to 2 water molecules using 4 electrons from cytochrome c in the IMS and 4 protons from the mitochondrial matrix. The protein is Cytochrome c oxidase subunit 5B, mitochondrial of Solanum tuberosum (Potato).